Here is a 541-residue protein sequence, read N- to C-terminus: Glucose-6-phosphate isomerase (541 aa).

Catalysis depends on Glu346, which acts as the Proton donor. Active-site residues include His377 and Lys506.

The protein belongs to the GPI family.

It is found in the cytoplasm. The enzyme catalyses alpha-D-glucose 6-phosphate = beta-D-fructose 6-phosphate. Its pathway is carbohydrate biosynthesis; gluconeogenesis. It participates in carbohydrate degradation; glycolysis; D-glyceraldehyde 3-phosphate and glycerone phosphate from D-glucose: step 2/4. Functionally, catalyzes the reversible isomerization of glucose-6-phosphate to fructose-6-phosphate. The sequence is that of Glucose-6-phosphate isomerase from Agrobacterium fabrum (strain C58 / ATCC 33970) (Agrobacterium tumefaciens (strain C58)).